A 172-amino-acid polypeptide reads, in one-letter code: Adenine phosphoribosyltransferase (172 aa).

Belongs to the purine/pyrimidine phosphoribosyltransferase family. In terms of assembly, homodimer.

The protein localises to the cytoplasm. The catalysed reaction is AMP + diphosphate = 5-phospho-alpha-D-ribose 1-diphosphate + adenine. The protein operates within purine metabolism; AMP biosynthesis via salvage pathway; AMP from adenine: step 1/1. Its function is as follows. Catalyzes a salvage reaction resulting in the formation of AMP, that is energically less costly than de novo synthesis. This chain is Adenine phosphoribosyltransferase, found in Picosynechococcus sp. (strain ATCC 27264 / PCC 7002 / PR-6) (Agmenellum quadruplicatum).